A 334-amino-acid chain; its full sequence is Beta-ketoacyl-[acyl-carrier-protein] synthase III (334 aa).

Active-site residues include Cys-114 and His-253. Residues 254–258 (QANIR) form an ACP-binding region. Asn-283 is a catalytic residue.

Belongs to the thiolase-like superfamily. FabH family. In terms of assembly, homodimer.

Its subcellular location is the cytoplasm. The enzyme catalyses malonyl-[ACP] + acetyl-CoA + H(+) = 3-oxobutanoyl-[ACP] + CO2 + CoA. The protein operates within lipid metabolism; fatty acid biosynthesis. Functionally, catalyzes the condensation reaction of fatty acid synthesis by the addition to an acyl acceptor of two carbons from malonyl-ACP. Catalyzes the first condensation reaction which initiates fatty acid synthesis and may therefore play a role in governing the total rate of fatty acid production. Possesses both acetoacetyl-ACP synthase and acetyl transacylase activities. Its substrate specificity determines the biosynthesis of branched-chain and/or straight-chain of fatty acids. The polypeptide is Beta-ketoacyl-[acyl-carrier-protein] synthase III (Campylobacter curvus (strain 525.92)).